A 313-amino-acid chain; its full sequence is Porphobilinogen deaminase (313 aa).

Position 241 is an S-(dipyrrolylmethanemethyl)cysteine (C241).

This sequence belongs to the HMBS family. As to quaternary structure, monomer. Requires dipyrromethane as cofactor.

It carries out the reaction 4 porphobilinogen + H2O = hydroxymethylbilane + 4 NH4(+). The protein operates within porphyrin-containing compound metabolism; protoporphyrin-IX biosynthesis; coproporphyrinogen-III from 5-aminolevulinate: step 2/4. In terms of biological role, tetrapolymerization of the monopyrrole PBG into the hydroxymethylbilane pre-uroporphyrinogen in several discrete steps. This is Porphobilinogen deaminase from Idiomarina loihiensis (strain ATCC BAA-735 / DSM 15497 / L2-TR).